We begin with the raw amino-acid sequence, 321 residues long: Probable UDP-sugar transporter protein SLC35A4 (321 aa).

The Cytoplasmic portion of the chain corresponds to 1-22 (MYSVNIEPDGSNHSPSRKRLKQ). The chain crosses the membrane as a helical span at residues 23-43 (ILWGLMLVLSVTIYGSHAPLI). The Lumenal segment spans residues 44–56 (YLCKVNGEIPFSS). A helical transmembrane segment spans residues 57–77 (SAVVLLIELSKFVISLVFFLI). Residues 78-91 (QDWKSLKASVSWHL) are Cytoplasmic-facing. A helical membrane pass occupies residues 92–112 (AAPYAVPAVLYGANNNLVVYI). The Lumenal segment spans residues 113-119 (QHFMDPS). Residues 120-140 (SFQVLSNLKIVSTAVLYSLFL) traverse the membrane as a helical segment. Residues 141–149 (RQRLSVRRW) lie on the Cytoplasmic side of the membrane. A helical membrane pass occupies residues 150–170 (LSVFLLLAAGVFYSYGGIQDL). Topologically, residues 171–180 (EKVSSDTNLY) are lumenal. Residues 181 to 201 (VTLPGLLLMLAYCLISGLSAV) traverse the membrane as a helical segment. Topologically, residues 202–211 (YTEMTLKTQK) are cytoplasmic. A helical transmembrane segment spans residues 212-232 (IPLNMQNLYLYSFGIIINLTA). The Lumenal segment spans residues 233 to 247 (HLTSSKNSDFFDGFS). The helical transmembrane segment at 248 to 268 (VWVWVIILSQALNGLIMSLVM) threads the bilayer. The Cytoplasmic portion of the chain corresponds to 269–321 (KLSNNITRLFIISFSMLANGFLSFILFQLQLTALFFLAVVLIGLAVYMYYGMK).

It belongs to the nucleotide-sugar transporter family. SLC35A subfamily.

The protein resides in the golgi apparatus membrane. It carries out the reaction CDP-L-ribitol(in) + CDP(out) = CDP-L-ribitol(out) + CDP(in). In terms of biological role, mediates the transport of CDP-ribitol. Does not exhibit CMP-sialic acid, UDP-galactose and UDP-N-acetylglucosamine transport activity. This is Probable UDP-sugar transporter protein SLC35A4 from Xenopus tropicalis (Western clawed frog).